A 128-amino-acid chain; its full sequence is Probable 4-amino-4-deoxy-L-arabinose-phosphoundecaprenol flippase subunit ArnF (128 aa).

The Cytoplasmic segment spans residues 1-2 (MG). The chain crosses the membrane as a helical span at residues 3-23 (LMWGLFSVIIASVAQLSLGFA). Over 24 to 35 (ASHLPPMTHLWD) the chain is Periplasmic. A helical transmembrane segment spans residues 36–56 (FIAALLAFGLDARILLLGLLG). Residues 57–76 (YLLSVFCWYKTLHKLALSKA) are Cytoplasmic-facing. A helical transmembrane segment spans residues 77-97 (YALLSMSYVLVWIASMVLPGW). The Periplasmic segment spans residues 98–100 (EGT). The helical transmembrane segment at 101 to 121 (FSLKALLGVACIMSGLMLIFL) threads the bilayer. Topologically, residues 122-128 (PMTKQRY) are cytoplasmic.

It belongs to the ArnF family. As to quaternary structure, heterodimer of ArnE and ArnF.

The protein localises to the cell inner membrane. The protein operates within bacterial outer membrane biogenesis; lipopolysaccharide biosynthesis. In terms of biological role, translocates 4-amino-4-deoxy-L-arabinose-phosphoundecaprenol (alpha-L-Ara4N-phosphoundecaprenol) from the cytoplasmic to the periplasmic side of the inner membrane. The protein is Probable 4-amino-4-deoxy-L-arabinose-phosphoundecaprenol flippase subunit ArnF of Escherichia coli (strain 55989 / EAEC).